Reading from the N-terminus, the 914-residue chain is Isoleucine--tRNA ligase (914 aa).

The 'HIGH' region motif lies at 64-74; that stretch reads PYANGNFHLGH. Residue glutamate 557 participates in L-isoleucyl-5'-AMP binding. The 'KMSKS' region signature appears at 598-602; that stretch reads PMSKS. ATP is bound at residue lysine 601. Zn(2+) contacts are provided by cysteine 889, cysteine 892, cysteine 906, and cysteine 909.

The protein belongs to the class-I aminoacyl-tRNA synthetase family. IleS type 1 subfamily. In terms of assembly, monomer. The cofactor is Zn(2+).

The protein resides in the cytoplasm. It carries out the reaction tRNA(Ile) + L-isoleucine + ATP = L-isoleucyl-tRNA(Ile) + AMP + diphosphate. Its function is as follows. Catalyzes the attachment of isoleucine to tRNA(Ile). As IleRS can inadvertently accommodate and process structurally similar amino acids such as valine, to avoid such errors it has two additional distinct tRNA(Ile)-dependent editing activities. One activity is designated as 'pretransfer' editing and involves the hydrolysis of activated Val-AMP. The other activity is designated 'posttransfer' editing and involves deacylation of mischarged Val-tRNA(Ile). The polypeptide is Isoleucine--tRNA ligase (Leptospira interrogans serogroup Icterohaemorrhagiae serovar copenhageni (strain Fiocruz L1-130)).